Reading from the N-terminus, the 111-residue chain is Cornifelin homolog B (111 aa).

Belongs to the cornifelin family.

This Xenopus laevis (African clawed frog) protein is Cornifelin homolog B (cnfn-b).